Here is a 159-residue protein sequence, read N- to C-terminus: Phosphopantetheine adenylyltransferase (159 aa).

Thr-10 lines the substrate pocket. ATP is bound by residues Thr-10–Phe-11 and His-18. Positions 42, 74, and 88 each coordinate substrate. ATP contacts are provided by residues Gly-89 to Arg-91, Glu-99, and Trp-124 to Ser-130.

This sequence belongs to the bacterial CoaD family. Homohexamer. Requires Mg(2+) as cofactor.

It localises to the cytoplasm. It carries out the reaction (R)-4'-phosphopantetheine + ATP + H(+) = 3'-dephospho-CoA + diphosphate. It participates in cofactor biosynthesis; coenzyme A biosynthesis; CoA from (R)-pantothenate: step 4/5. Reversibly transfers an adenylyl group from ATP to 4'-phosphopantetheine, yielding dephospho-CoA (dPCoA) and pyrophosphate. This Yersinia pseudotuberculosis serotype O:3 (strain YPIII) protein is Phosphopantetheine adenylyltransferase.